We begin with the raw amino-acid sequence, 182 residues long: uncharacterized protein (182 aa).

Belongs to the DNA 3' phosphatase family.

This is an uncharacterized protein from Autographa californica nuclear polyhedrosis virus (AcMNPV).